The following is a 319-amino-acid chain: Acetyl-coenzyme A carboxylase carboxyl transferase subunit alpha (319 aa).

The CoA carboxyltransferase C-terminal domain occupies 34 to 295 (ELEEEVSKLK…KVRLKRDLAD (262 aa)).

It belongs to the AccA family. In terms of assembly, acetyl-CoA carboxylase is a heterohexamer composed of biotin carboxyl carrier protein (AccB), biotin carboxylase (AccC) and two subunits each of ACCase subunit alpha (AccA) and ACCase subunit beta (AccD).

It is found in the cytoplasm. It carries out the reaction N(6)-carboxybiotinyl-L-lysyl-[protein] + acetyl-CoA = N(6)-biotinyl-L-lysyl-[protein] + malonyl-CoA. Its pathway is lipid metabolism; malonyl-CoA biosynthesis; malonyl-CoA from acetyl-CoA: step 1/1. Functionally, component of the acetyl coenzyme A carboxylase (ACC) complex. First, biotin carboxylase catalyzes the carboxylation of biotin on its carrier protein (BCCP) and then the CO(2) group is transferred by the carboxyltransferase to acetyl-CoA to form malonyl-CoA. The sequence is that of Acetyl-coenzyme A carboxylase carboxyl transferase subunit alpha from Pseudoalteromonas translucida (strain TAC 125).